The following is a 176-amino-acid chain: Small ribosomal subunit protein uS4 (176 aa).

The S4 RNA-binding domain occupies 103-165; that stretch reads RRLQTIVYKK…PTSPYAKRRL (63 aa).

It belongs to the universal ribosomal protein uS4 family. As to quaternary structure, part of the 30S ribosomal subunit. Contacts protein S5. The interaction surface between S4 and S5 is involved in control of translational fidelity.

Its function is as follows. One of the primary rRNA binding proteins, it binds directly to 16S rRNA where it nucleates assembly of the body of the 30S subunit. With S5 and S12 plays an important role in translational accuracy. This Hyperthermus butylicus (strain DSM 5456 / JCM 9403 / PLM1-5) protein is Small ribosomal subunit protein uS4.